A 166-amino-acid polypeptide reads, in one-letter code: Thiamine precursor transporter HmpT (166 aa).

Helical transmembrane passes span 14–34 (LLAI…FPIP), 35–55 (GSAG…VFLF), 62–82 (IIGG…NYMF), 105–125 (FLLS…LMYG), and 126–146 (WGSA…GFVL).

As to quaternary structure, in E.coli forms a stable energy-coupling factor (ECF) transporter complex composed of 2 membrane-embedded substrate-binding protein (S component), 2 ATP-binding proteins (A and A' components) and 2 transmembrane proteins (T component), probably with a stoichiometry of 2:1:1:2. May be able to interact with more than 1 S component at a time.

It localises to the cell membrane. In terms of biological role, probably a thiamine precursor-binding protein that interacts with the energy-coupling factor (ECF) ABC-transporter complex. Unlike classic ABC transporters this ECF transporter provides the energy necessary to transport a number of different substrates. The substrates themselves are bound by transmembrane, not extracytoplasmic soluble proteins. The protein is Thiamine precursor transporter HmpT (hmpT) of Lactococcus lactis subsp. cremoris (strain MG1363).